The chain runs to 149 residues: Calmodulin (149 aa).

Residue A2 is modified to N-acetylalanine. EF-hand domains follow at residues 8–43, 44–79, 81–116, and 117–149; these read EQIA…LGQN, PTEA…KMKD, DSEE…LGEK, and LTDE…MTAK. Residues D21, D23, D25, T27, E32, D57, D59, N61, T63, E68, D94, D96, N98, Y100, and E105 each coordinate Ca(2+). N6,N6,N6-trimethyllysine is present on K116. D130, D132, D134, Q136, and E141 together coordinate Ca(2+).

It belongs to the calmodulin family.

Calmodulin acts as part of a calcium signal transduction pathway by mediating the control of a large number of enzymes, ion channels, aquaporins and other proteins through calcium-binding. Calcium-binding is required for the activation of calmodulin. Among the enzymes to be stimulated by the calmodulin-calcium complex are a number of protein kinases, such as myosin light-chain kinases and calmodulin-dependent protein kinase type II (CaMK2), and phosphatases. The sequence is that of Calmodulin (calm) from Electrophorus electricus (Electric eel).